A 202-amino-acid polypeptide reads, in one-letter code: Dephospho-CoA kinase (202 aa).

Residues 4–201 enclose the DPCK domain; sequence VIGLTGGIAS…QKYLAMSKQN (198 aa). 12-17 contributes to the ATP binding site; the sequence is ASGKTT.

Belongs to the CoaE family.

The protein localises to the cytoplasm. The enzyme catalyses 3'-dephospho-CoA + ATP = ADP + CoA + H(+). The protein operates within cofactor biosynthesis; coenzyme A biosynthesis; CoA from (R)-pantothenate: step 5/5. Catalyzes the phosphorylation of the 3'-hydroxyl group of dephosphocoenzyme A to form coenzyme A. The chain is Dephospho-CoA kinase from Vibrio vulnificus (strain CMCP6).